The chain runs to 1220 residues: Plasma membrane calcium-transporting ATPase 3 (1220 aa).

Residues 1–20 (MGDMANSSIEFHPKPQQQRD) are compositionally biased toward polar residues. The disordered stretch occupies residues 1–23 (MGDMANSSIEFHPKPQQQRDVPQ). Residues 1-97 (MGDMANSSIE…NFIPPKQPKT (97 aa)) lie on the Cytoplasmic side of the membrane. S8 carries the phosphoserine modification. Residues 98–118 (FLQLVWEALQDVTLIILEVAA) traverse the membrane as a helical segment. Over 119–155 (IVSLGLSFYAPPGEESEACGNVSGGAEDEGEAEAGWI) the chain is Extracellular. Residues 156–176 (EGAAILLSVICVVLVTAFNDW) form a helical membrane-spanning segment. Over 177–364 (SKEKQFRGLQ…KEKSVLQGKL (188 aa)) the chain is Cytoplasmic. The tract at residues 298–355 (EEEKKDKKGKQQDGAMESSQTKAKKQDGAVAMEMQPLKSAEGGEMEEREKKKANAPKK) is disordered. Basic and acidic residues-rich tracts occupy residues 299 to 308 (EEKKDKKGKQ) and 342 to 355 (MEER…APKK). The helical transmembrane segment at 365 to 384 (TKLAVQIGKAGLVMSAITVI) threads the bilayer. At 385 to 417 (ILVLYFVIETFVVEGRTWLAECTPVYVQYFVKF) the chain is on the extracellular side. Residues 418-435 (FIIGVTVLVVAVPEGLPL) form a helical membrane-spanning segment. Residues 436-849 (AVTISLAYSV…MWGRNVYDSI (414 aa)) are Cytoplasmic-facing. The active-site 4-aspartylphosphate intermediate is the D473. Positions 794 and 798 each coordinate Mg(2+). A helical membrane pass occupies residues 850–869 (SKFLQFQLTVNVVAVIVAFT). At 870–879 (GACITQDSPL) the chain is on the extracellular side. Residues 880–900 (KAVQMLWVNLIMDTFASLALA) traverse the membrane as a helical segment. Residues 901–920 (TEPPTESLLLRKPYGRDKPL) lie on the Cytoplasmic side of the membrane. Residues 921–943 (ISRTMMKNILGHAVYQLAIIFTL) traverse the membrane as a helical segment. The Extracellular segment spans residues 944–961 (LFVGELFFDIDSGRNAPL). The helical transmembrane segment at 962-983 (HSPPSEHYTIIFNTFVMMQLFN) threads the bilayer. At 984–1002 (EINARKIHGERNVFDGIFS) the chain is on the cytoplasmic side. A helical transmembrane segment spans residues 1003–1024 (NPIFCTIVLGTFGIQIVIVQFG). Residues 1025 to 1034 (GKPFSCSPLS) lie on the Extracellular side of the membrane. Residues 1035–1056 (TEQWLWCLFVGVGELVWGQVIA) traverse the membrane as a helical segment. The Cytoplasmic segment spans residues 1057 to 1220 (TIPTSQLKCL…SPLHSVETSL (164 aa)). T1079 carries the phosphothreonine modification. A calmodulin-binding subdomain A region spans residues 1097 to 1114 (LRRGQILWFRGLNRIQTQ). T1113 bears the Phosphothreonine; by PKC mark. The calmodulin-binding subdomain B stretch occupies residues 1115–1124 (IRVVKAFRSS). Residues 1166–1186 (ENEERLRAPPPPSPNQNNNAI) form a disordered region.

Belongs to the cation transport ATPase (P-type) (TC 3.A.3) family. Type IIB subfamily. As to quaternary structure, interacts with PDZD11. Interacts (via N-terminus) with YWHAE. In terms of tissue distribution, highly expressed in the cerebellum. Expressed in adrenal glands.

Its subcellular location is the cell membrane. The protein localises to the presynaptic cell membrane. It carries out the reaction Ca(2+)(in) + ATP + H2O = Ca(2+)(out) + ADP + phosphate + H(+). With respect to regulation, down-regulated by YWHAE. ATP-driven Ca(2+) ion pump involved in the maintenance of basal intracellular Ca(2+) levels at the presynaptic terminals. Uses ATP as an energy source to transport cytosolic Ca(2+) ions across the plasma membrane to the extracellular compartment. May counter-transport protons, but the mechanism and the stoichiometry of this Ca(2+)/H(+) exchange remains to be established. The chain is Plasma membrane calcium-transporting ATPase 3 from Homo sapiens (Human).